The chain runs to 192 residues: Pyridoxal 5'-phosphate synthase subunit PdxT (192 aa).

Residue 46–48 (GES) participates in L-glutamine binding. Residue cysteine 78 is the Nucleophile of the active site. L-glutamine-binding positions include arginine 106 and 135 to 136 (IR). Residues histidine 171 and glutamate 173 each act as charge relay system in the active site.

The protein belongs to the glutaminase PdxT/SNO family. In terms of assembly, in the presence of PdxS, forms a dodecamer of heterodimers. Only shows activity in the heterodimer.

The enzyme catalyses aldehydo-D-ribose 5-phosphate + D-glyceraldehyde 3-phosphate + L-glutamine = pyridoxal 5'-phosphate + L-glutamate + phosphate + 3 H2O + H(+). It carries out the reaction L-glutamine + H2O = L-glutamate + NH4(+). It functions in the pathway cofactor biosynthesis; pyridoxal 5'-phosphate biosynthesis. Catalyzes the hydrolysis of glutamine to glutamate and ammonia as part of the biosynthesis of pyridoxal 5'-phosphate. The resulting ammonia molecule is channeled to the active site of PdxS. This chain is Pyridoxal 5'-phosphate synthase subunit PdxT, found in Kosmotoga olearia (strain ATCC BAA-1733 / DSM 21960 / TBF 19.5.1).